Here is a 742-residue protein sequence, read N- to C-terminus: Two pore calcium channel protein 1 (742 aa).

Positions 1 to 44 (MSEAQAPLITEEAAERGLASSGSRRLSDGGGGQGSRKYRRRSDA) are disordered. The Cytoplasmic portion of the chain corresponds to 1–82 (MSEAQAPLIT…NDTRFGRAMS (82 aa)). The chain crosses the membrane as a helical span at residues 83-103 (FYFVYLRLDWLWSLNIFALIL). The Extracellular portion of the chain corresponds to 104–140 (LNFLEKPLWCRKDALHACDQRDMYFLGQLPYFSKTES). Residues 141 to 161 (LIYEGLTLVILVMEILCPLSY) traverse the membrane as a helical segment. Residues 162–176 (EGLNIFWRSTTNKLK) are Cytoplasmic-facing. The chain crosses the membrane as a helical span at residues 177 to 197 (ILLLFILACDILVFAFSSQPF). Residues 198 to 204 (RLAPYIR) lie on the Extracellular side of the membrane. The helical; Voltage-sensor transmembrane segment at 205-226 (VVFLIMTIRELRMCAITLAGLI) threads the bilayer. The chain crosses the membrane as a helical span at residues 227–247 (GTYLNVLALSLLFLLFASWLA). At 248–258 (YVTFEDTPQGK) the chain is on the extracellular side. Positions 259 to 273 (TIFSSYGVTLYQMFV) form an intramembrane region, pore-forming. The Extracellular portion of the chain corresponds to 274–296 (LFTTSNNPDVWVPAYKISRWYSL). Residues 297 to 317 (FFIVYVLLGVYFLTNLILAVI) form a helical membrane-spanning segment. The Cytoplasmic portion of the chain corresponds to 318-446 (YDSFKEQFAK…SFVRSRTFEY (129 aa)). EF-hand domains follow at residues 335–370 (IRKNILQKAFELIDTNTRGYLDREQCISLLNELNKY) and 376–411 (TSREDFELIFAELDRSGDFKVTSEEFADLCNTIAIK). Residues 447 to 467 (IIVFVLLINLVAVIIETTLDI) form a helical membrane-spanning segment. The Extracellular portion of the chain corresponds to 468–480 (ENSSSQETWQEVE). The N-linked (GlcNAc...) asparagine glycan is linked to N469. The helical transmembrane segment at 481-501 (FFLGWIYVAEMALKIFSLGFG) threads the bilayer. At 502–510 (AYWMEGQNK) the chain is on the cytoplasmic side. Residues 511–531 (FDFVLTWTIFIGETLTFAFPS) form a helical membrane-spanning segment. The Extracellular portion of the chain corresponds to 532-540 (KLPFLSNGE). The chain crosses the membrane as a helical; Voltage-sensor span at residues 541-558 (WIRYLLLGRVLRLTRILL). The Cytoplasmic segment spans residues 559–582 (QVQRFRVFVATFFTLMSSLMPYLG). A helical membrane pass occupies residues 583–603 (IVFCILCMYCSLGLQIFGGIV). The Extracellular segment spans residues 604–627 (YAGNPTLEETDLFSNDYLLFNFND). Positions 628 to 642 (YPSGMVTLFNLLVMG) form an intramembrane region, pore-forming. Residues 643-663 (NWQVWMESYWQLTGSSWSLIY) lie on the Extracellular side of the membrane. Residues 664–684 (FVSFYLISILLLLNLIVAFVL) form a helical membrane-spanning segment. Residues 685–742 (EAFFAEMELEKGEEVDIQSPTSGGIKKRRSMRVRSKGTMVDILLHHMLSNELDGSQNS) lie on the Cytoplasmic side of the membrane.

This sequence belongs to the calcium channel alpha-1 subunit (TC 1.A.1.11) family. Two pore calcium channel subfamily. Homodimer.

It is found in the membrane. Its activity is regulated as follows. Inhibited by Al(3+). In terms of biological role, functions as a voltage-gated inward-rectifying Ca(2+) channel (VDCC) across the plasma membrane that mediates sucrose-induced Ca(2+) influx in autotrophically grown leaf cells. Acts as the major ROS-responsive Ca(2+) channel and is the possible target of Al-dependent inhibition. Plays a regulatory role in defense responses. This is Two pore calcium channel protein 1 (TPC1) from Hordeum vulgare (Barley).